We begin with the raw amino-acid sequence, 199 residues long: Thymidine kinase (199 aa).

Residues 23–30 (GSMFSGKT) and 95–98 (DEAQ) each bind ATP. The active-site Proton acceptor is Glu-96. Zn(2+)-binding residues include Cys-152, Cys-155, Cys-184, and Cys-187.

This sequence belongs to the thymidine kinase family. As to quaternary structure, homotetramer.

Its subcellular location is the cytoplasm. The catalysed reaction is thymidine + ATP = dTMP + ADP + H(+). The chain is Thymidine kinase from Bacteroides thetaiotaomicron (strain ATCC 29148 / DSM 2079 / JCM 5827 / CCUG 10774 / NCTC 10582 / VPI-5482 / E50).